The chain runs to 191 residues: Phosphopantetheine adenylyltransferase (191 aa).

Ser-8 is a binding site for substrate. ATP-binding positions include 8–9 and His-16; that span reads SF. Lys-40, Thr-72, and Arg-86 together coordinate substrate. ATP-binding positions include 87 to 89, Glu-97, and 122 to 128; these read GLR and YSFLSSS.

This sequence belongs to the bacterial CoaD family. Homohexamer. Mg(2+) serves as cofactor.

It is found in the cytoplasm. It carries out the reaction (R)-4'-phosphopantetheine + ATP + H(+) = 3'-dephospho-CoA + diphosphate. It participates in cofactor biosynthesis; coenzyme A biosynthesis; CoA from (R)-pantothenate: step 4/5. Its function is as follows. Reversibly transfers an adenylyl group from ATP to 4'-phosphopantetheine, yielding dephospho-CoA (dPCoA) and pyrophosphate. The chain is Phosphopantetheine adenylyltransferase from Nostoc sp. (strain PCC 7120 / SAG 25.82 / UTEX 2576).